Consider the following 163-residue polypeptide: uncharacterized protein (163 aa).

It belongs to the IMPDH/GMPR family.

This is an uncharacterized protein from Haemophilus influenzae (strain ATCC 51907 / DSM 11121 / KW20 / Rd).